Here is a 465-residue protein sequence, read N- to C-terminus: Cysteine--tRNA ligase (465 aa).

Cys-27 contacts Zn(2+). The 'HIGH' region motif lies at 29–39; sequence PTVYDDAHLGH. Zn(2+) contacts are provided by Cys-207, His-237, and Glu-241. The short motif at 269–273 is the 'KMSKS' region element; that stretch reads KMSKS. Lys-272 contributes to the ATP binding site.

This sequence belongs to the class-I aminoacyl-tRNA synthetase family. In terms of assembly, monomer. It depends on Zn(2+) as a cofactor.

It is found in the cytoplasm. The enzyme catalyses tRNA(Cys) + L-cysteine + ATP = L-cysteinyl-tRNA(Cys) + AMP + diphosphate. The polypeptide is Cysteine--tRNA ligase (Nitratiruptor sp. (strain SB155-2)).